The primary structure comprises 564 residues: Serine/threonine-protein kinase PknA (564 aa).

Residues 9–271 (YRVIKTLGSG…TAREMLEALQ (263 aa)) form the Protein kinase domain. Residues 15–23 (LGSGGFGET) and Lys40 contribute to the ATP site. The active-site Proton acceptor is the Asp139. A compositionally biased stretch (polar residues) spans 360 to 406 (QPVTQTTSLPSETTISNNDTPTVEPSPTDTPETPISQTVTQDPTPQA). A disordered region spans residues 360-458 (QPVTQTTSLP…PVEATDRPSP (99 aa)). A compositionally biased stretch (low complexity) spans 428–445 (TTEPTTSVPQPTTPSEPQ).

The protein belongs to the protein kinase superfamily. Ser/Thr protein kinase family.

The enzyme catalyses L-seryl-[protein] + ATP = O-phospho-L-seryl-[protein] + ADP + H(+). It catalyses the reaction L-threonyl-[protein] + ATP = O-phospho-L-threonyl-[protein] + ADP + H(+). Its function is as follows. Probably required for both normal cellular growth and differentiation. Inactivation of pknA leads to colonies that appear light green and rough in the absence of combined nitrogen. This Nostoc sp. (strain PCC 7120 / SAG 25.82 / UTEX 2576) protein is Serine/threonine-protein kinase PknA (pknA).